Consider the following 68-residue polypeptide: Large ribosomal subunit protein uL30 (68 aa).

The protein belongs to the universal ribosomal protein uL30 family. Part of the 50S ribosomal subunit.

In Agrobacterium fabrum (strain C58 / ATCC 33970) (Agrobacterium tumefaciens (strain C58)), this protein is Large ribosomal subunit protein uL30.